The following is a 245-amino-acid chain: 1-(5-phosphoribosyl)-5-[(5-phosphoribosylamino)methylideneamino] imidazole-4-carboxamide isomerase (245 aa).

Asp7 (proton acceptor) is an active-site residue. The active-site Proton donor is the Asp129.

The protein belongs to the HisA/HisF family.

The protein resides in the cytoplasm. It carries out the reaction 1-(5-phospho-beta-D-ribosyl)-5-[(5-phospho-beta-D-ribosylamino)methylideneamino]imidazole-4-carboxamide = 5-[(5-phospho-1-deoxy-D-ribulos-1-ylimino)methylamino]-1-(5-phospho-beta-D-ribosyl)imidazole-4-carboxamide. It participates in amino-acid biosynthesis; L-histidine biosynthesis; L-histidine from 5-phospho-alpha-D-ribose 1-diphosphate: step 4/9. This is 1-(5-phosphoribosyl)-5-[(5-phosphoribosylamino)methylideneamino] imidazole-4-carboxamide isomerase from Shewanella halifaxensis (strain HAW-EB4).